A 173-amino-acid polypeptide reads, in one-letter code: Archaemetzincin (173 aa).

Histidine 130 provides a ligand contact to Zn(2+). Glutamate 131 (proton acceptor) is an active-site residue. The Zn(2+) site is built by histidine 134, histidine 140, cysteine 141, cysteine 146, cysteine 165, and cysteine 168.

The protein belongs to the peptidase M54 family. As to quaternary structure, monomer. Zn(2+) serves as cofactor.

Probable zinc metalloprotease whose natural substrate is unknown. The protein is Archaemetzincin of Halobacterium salinarum (strain ATCC 29341 / DSM 671 / R1).